Reading from the N-terminus, the 726-residue chain is Kinesin-like protein KIN-10B (726 aa).

3 disordered regions span residues 1 to 20, 60 to 82, and 402 to 423; these read MEQQQKQEPGGGGGGVRVVA, AATAAASGRGDGPKDKQQQQQQK, and KNARPGFNNSGVKGGQTPTANR. The region spanning 15–359 is the Kinesin motor domain; it reads GVRVVARICP…LALASRSSQV (345 aa). A compositionally biased stretch (polar residues) spans 408 to 423; the sequence is FNNSGVKGGQTPTANR.

It belongs to the TRAFAC class myosin-kinesin ATPase superfamily. Kinesin family. KIN-10 subfamily.

The polypeptide is Kinesin-like protein KIN-10B (Oryza sativa subsp. japonica (Rice)).